The sequence spans 201 residues: Large ribosomal subunit protein uL4 (201 aa).

The tract at residues 44 to 73 (RAQKSRAEVKASRKKPWRQKGTGRARAGSV) is disordered. Basic residues predominate over residues 55–66 (SRKKPWRQKGTG).

Belongs to the universal ribosomal protein uL4 family. Part of the 50S ribosomal subunit.

Its function is as follows. One of the primary rRNA binding proteins, this protein initially binds near the 5'-end of the 23S rRNA. It is important during the early stages of 50S assembly. It makes multiple contacts with different domains of the 23S rRNA in the assembled 50S subunit and ribosome. Forms part of the polypeptide exit tunnel. This Hamiltonella defensa subsp. Acyrthosiphon pisum (strain 5AT) protein is Large ribosomal subunit protein uL4.